An 87-amino-acid chain; its full sequence is Large ribosomal subunit protein bL27 (87 aa).

The segment at 1–21 (MAHKKAGGSSRNGRDSESKRL) is disordered.

It belongs to the bacterial ribosomal protein bL27 family.

The protein is Large ribosomal subunit protein bL27 of Burkholderia mallei (strain NCTC 10247).